Consider the following 503-residue polypeptide: TGF-beta receptor type-1 (503 aa).

Residues 1 to 29 form the signal peptide; it reads MEVAAGAPRSRLLLFVLAATATLAPEATA. At 30 to 126 the chain is on the extracellular side; the sequence is FQCFCHLCTK…PPSGLGPVEL (97 aa). Disulfide bonds link C32–C50, C34–C37, C44–C67, C82–C96, and C97–C102. The N-linked (GlcNAc...) asparagine glycan is linked to N41. The chain crosses the membrane as a helical span at residues 127–147; sequence AAVIAGPVCFVCISLMLMVYI. Topologically, residues 148–503 are cytoplasmic; that stretch reads CHNRTVIHHR…QLSQQEGIKM (356 aa). At S165 the chain carries Phosphoserine. The GS domain maps to 175–204; that stretch reads TTLKDLIYDMTTSGSGSGLPLLVQRTIART. Phosphothreonine; by TGFBR2 is present on residues T185 and T186. Phosphoserine; by TGFBR2 is present on residues S187, S189, and S191. The short motif at 193–194 is the FKBP1A-binding element; it reads LP. Positions 205 to 495 constitute a Protein kinase domain; it reads IVLQESIGKG…LRIKKTLSQL (291 aa). Residues 211 to 219 and K232 each bind ATP; that span reads IGKGRFGEV. D333 serves as the catalytic Proton acceptor. A Glycyl lysine isopeptide (Lys-Gly) (interchain with G-Cter in SUMO) cross-link involves residue K391.

The protein belongs to the protein kinase superfamily. TKL Ser/Thr protein kinase family. TGFB receptor subfamily. Homodimer; in the endoplasmic reticulum but also at the cell membrane. Heterohexamer; TGFB1, TGFB2 and TGFB3 homodimeric ligands assemble a functional receptor composed of two TGFBR1 and TGFBR2 heterodimers to form a ligand-receptor heterohexamer. The respective affinity of TGBRB1 and TGFBR2 for the ligands may modulate the kinetics of assembly of the receptor and may explain the different biological activities of TGFB1, TGFB2 and TGFB3. Component of a complex composed of TSC22D1 (via N-terminus), TGFBR1 and TGFBR2; the interaction between TSC22D1 and TGFBR1 is inhibited by SMAD7 and promoted by TGFB1. Interacts with CD109; inhibits TGF-beta receptor activation in keratinocytes. Interacts with RBPMS. Interacts (unphosphorylated) with FKBP1A; prevents TGFBR1 phosphorylation by TGFBR2 and stabilizes it in the inactive conformation. Interacts with SMAD2, SMAD3 and ZFYVE9; ZFYVE9 recruits SMAD2 and SMAD3 to the TGF-beta receptor. Interacts with TRAF6 and MAP3K7; induces MAP3K7 activation by TRAF6. Interacts with PARD6A; involved in TGF-beta induced epithelial to mesenchymal transition. Interacts with NEDD4L. Interacts with SMAD7, SMURF1 and SMURF2; SMAD7 recruits NEDD4L, SMURF1 and SMURF2 to the TGF-beta receptor. Interacts with USP15 and VPS39. Interacts with SDCBP (via C-terminus). Interacts with CAV1 and this interaction is impaired in the presence of SDCBP. Interacts with APPL1; interaction is TGF beta dependent; mediates trafficking of the TGFBR1 from the endosomes to the nucleus via microtubules in a TRAF6-dependent manner. Interacts with GPR50; this interaction promotes the constitutive activation of SMAD signaling pathway. Mg(2+) is required as a cofactor. The cofactor is Mn(2+). In terms of processing, phosphorylated at basal levels in the absence of ligand. Activated upon phosphorylation by TGFBR2, mainly in the GS domain. Phosphorylation in the GS domain abrogates FKBP1A-binding. Post-translationally, N-Glycosylated. Ubiquitinated; undergoes ubiquitination catalyzed by several E3 ubiquitin ligases including SMURF1, SMURF2 and NEDD4L2. Results in the proteasomal and/or lysosomal degradation of the receptor thereby negatively regulating its activity. Deubiquitinated by USP15, leading to stabilization of the protein and enhanced TGF-beta signal. Its ubiquitination and proteasome-mediated degradation is negatively regulated by SDCBP.

The protein resides in the cell membrane. It localises to the cell junction. The protein localises to the tight junction. It is found in the membrane raft. Its subcellular location is the cell surface. It catalyses the reaction L-threonyl-[receptor-protein] + ATP = O-phospho-L-threonyl-[receptor-protein] + ADP + H(+). It carries out the reaction L-seryl-[receptor-protein] + ATP = O-phospho-L-seryl-[receptor-protein] + ADP + H(+). With respect to regulation, kept in an inactive conformation by FKBP1A preventing receptor activation in absence of ligand. CD109 is another inhibitor of the receptor. Its function is as follows. Transmembrane serine/threonine kinase forming with the TGF-beta type II serine/threonine kinase receptor, TGFBR2, the non-promiscuous receptor for the TGF-beta cytokines TGFB1, TGFB2 and TGFB3. Transduces the TGFB1, TGFB2 and TGFB3 signal from the cell surface to the cytoplasm and is thus regulating a plethora of physiological and pathological processes including cell cycle arrest in epithelial and hematopoietic cells, control of mesenchymal cell proliferation and differentiation, wound healing, extracellular matrix production, immunosuppression and carcinogenesis. The formation of the receptor complex composed of 2 TGFBR1 and 2 TGFBR2 molecules symmetrically bound to the cytokine dimer results in the phosphorylation and the activation of TGFBR1 by the constitutively active TGFBR2. Activated TGFBR1 phosphorylates SMAD2 which dissociates from the receptor and interacts with SMAD4. The SMAD2-SMAD4 complex is subsequently translocated to the nucleus where it modulates the transcription of the TGF-beta-regulated genes. This constitutes the canonical SMAD-dependent TGF-beta signaling cascade. Also involved in non-canonical, SMAD-independent TGF-beta signaling pathways. For instance, TGFBR1 induces TRAF6 autoubiquitination which in turn results in MAP3K7 ubiquitination and activation to trigger apoptosis. Also regulates epithelial to mesenchymal transition through a SMAD-independent signaling pathway through PARD6A phosphorylation and activation. The chain is TGF-beta receptor type-1 (TGFBR1) from Sus scrofa (Pig).